A 268-amino-acid polypeptide reads, in one-letter code: Undecaprenyl-diphosphatase (268 aa).

8 helical membrane passes run 4–24 (STTL…FIPV), 50–70 (IQLG…VSVI), 84–104 (VAVL…HGFI), 109–129 (FETP…LLFV), 144–164 (LPLN…VPGV), 185–205 (AEFS…FDLF), 214–234 (SALG…VLVV), and 247–267 (ALFG…LLAG).

It belongs to the UppP family.

The protein localises to the cell inner membrane. The catalysed reaction is di-trans,octa-cis-undecaprenyl diphosphate + H2O = di-trans,octa-cis-undecaprenyl phosphate + phosphate + H(+). In terms of biological role, catalyzes the dephosphorylation of undecaprenyl diphosphate (UPP). Confers resistance to bacitracin. The sequence is that of Undecaprenyl-diphosphatase from Cereibacter sphaeroides (strain ATCC 17029 / ATH 2.4.9) (Rhodobacter sphaeroides).